Consider the following 2582-residue polypeptide: MADPIMDLFDDPNLFGLDSLTDDSFNQVTQDPIEEALGLPSSLDSLDQMNQDGGGGDVGNSSASDLVPPPEETASTELPKESTAPAPESLTLHDYTTQPTSQEQPAQPVLQTSTPTAGLLQVSKSQEILSQGNPFMGVSATGVSPSNTGGQPSQSAPKIVILKAPPNSSVTGTHVAQIQAQGITSTAQPLVAGTANGGKVTFTKVLTGTPLRPGVSIVSGNTVLATKVPGNQAAVQRIVQPSRPVKQLVLQPVKGSAPAGNPGAAGPPLKPAVTLTSTPTQGESKRITLVLQQPQSGGPQGHRHVVLGSLPGKIVLQGNQLAALTQAKNAQGQPAKVVTIQLQVQQPQQKIQIVPQPPSSQPQPQPQPPPSAQPLTLSSVQQAQIMGPGQNPGQRLSVPLKMVLQPQAGSSQGASSGLSVVKVLSASEVAALSSPASCAPHTAGKTGMEENRRLEHQKKQEKANRIVAEAIARARARGEQNIPRVLNEDELPSVRPEEEGEKKRRKKSSGERLKEEKPKKSKTAAASKTKGKSKLNTITPVVGKKRKRNTSSDNSDVEVMPAQSPREDEESSIQKRRSNRQVKRKKYTEDLDIKITDDEEEEEVDVTGPIKPEPILPEPVQEPDGETLPSMQFFVENPSEEDAAIVDKVLSMRVVKKELPSGQYTEAEEFFVKYKNYSYLHCEWATISQLEKDKRIHQKLKRFKTKMAQMRHFFHEDEEPFNPDYVEVDRILDESHSVDKDNGEPVIYYLVKWCSLPYEDSTWELKEDVDEGKIREFKRIQSRHPELRRVNRPQANAWKKLELSHEYKNRNQLREYQLEGVNWLLFNWYNRQNCILADEMGLGKTIQSIAFLQEVYNVGIHGPFLVIAPLSTITNWEREFNTWTEMNTIVYHGSLASRQMIQQYEMYCKDSRGRLIPGAYKFDALITTFEMILSDCPELREIEWRCVIIDEAHRLKNRNCKLLDSLKHMDLEHKVLLTGTPLQNTVEELFSLLHFLEPSQFPSESEFLKDFGDLKTEEQVQKLQAILKPMMLRRLKEDVEKNLAPKQETIIEVELTNIQKKYYRAILEKNFSFLSKGAGHTNMPNLLNTMMELRKCCNHPYLINGAEEKILMEFREACHIIPQDFHLQAMVRSAGKLVLIDKLLPKLKAGGHKVLIFSQMVRCLDILEDYLIQRRYLYERIDGRVRGNLRQAAIDRFSKPDSDRFVFLLCTRAGGLGINLTAADTCIIFDSDWNPQNDLQAQARCHRIGQSKAVKVYRLITRNSYEREMFDKASLKLGLDKAVLQSMSGRDGNITGIQQFSKKEIEDLLRKGAYAAIMEEDDEGSKFCEEDIDQILLRRTTTITIESEGKGSTFAKASFVASENRTDISLDDPNFWQKWAKKADLDMDLLNSKNNLVIDTPRVRKQTRHFSTLKDDDLVEFSDLESEDDERPRSRRHDRHHTYGRTDCFRVEKHLLVYGWGRWRDILSHGRFKRRMTERDVETICRAILVYCLLHYRGDENIKSFIWDLISPAENGKTKELQNHSGLSIPVPRGRKGKKVKSQSTFDIHKADWIRKYNPDTLFQDESYKKHLKHQCNKVLLRVRMLYYLRQEVIGDQAEKVLGGAIASEIDIWFPVVDQLEVPTTWWDSEADKSLLIGVFKHGYEKYNTMRADPALCFLEKAGRPDDKAIAAEHRVLDNFSDLVEGIDFDKDCEDPEYKPLQGPPKDPDDEGDPLMMMDEEISVIDGEEAQVTQQPGHLFWPPGSALTARLRRLVTAYQRSYKREQMKMEAAERGDRRRRRCEAAFKLKEIARREKQQRWTRREQTDFYRVVSTFGVEYDPDNMQFHWDRFRTFARLDKKTDESLTKYFHGFVAMCRQVCRLPPAAGDEPPDPNLFIEPITEERASRTLYRIELLRRLREQVLCHPLLEDRLALCQPPGLELPKWWEPVRHDGELLRGAARHGVSQTDCNIMQDPDFSFLAARMNYMQNHQAGASAASLSRCSTPLLHQQCTSRTASPSPLRPDAPVEKSPEESTVQVPNLESLTLKLEDEVVARSRLTSQDYEVRVGSSDTAPLSRSVPPVKLEDEDDSDSELDLSKLSPSSSSSSSSSSSSSSTDESEDEKEEKLTADRSRPKLYDEESLLSLTMSQDGFPNEDGEQMTPELLLLQERQRASEWPKDRVLINRIDLVCQAVLSGKWPSNRRSQEVTAGGILGPGNHLLDSPSLTPGEDGDSPVPTPRSGSAASMAEEEASAVTTAAAQFTKLRRGMDEKEFTVQIKDEEGLKLTFQKHRLMANGVMGDGHPLFHKKKGNRKKLVELEVECMEEPNHLDLDLETRIPVINKVDGTLLVGDEAPRRAELEMWLQGHPEFAVDPRFLAYMEERRKQKWQRCKKNNKAELNCLGMEPVQPANSRNGKKGHYAETAFNRVLPGPVAPENSKKRVRRTRPDLSKMMALMQGGSTGSLSLHNTFQHSSSNLQSVSSLGHSSTTSASLPFMPFVMGAAAPPHVDSSTMLHHHHHHPHPHHHHHHHPGLRTTGYPSSPATTTSGTALRLPTLQPEDDDEEEDEEDDDLSQGYDSSERDFSLIDDPMMPANSDSSEDADD.

Disordered stretches follow at residues 22–111 (DDSF…PVLQ), 136–155 (MGVS…PSQS), 253–283 (VKGS…TQGE), and 349–377 (QKIQ…PLTL). Composition is skewed to polar residues over residues 42–51 (SLDSLDQMNQ), 94–111 (DYTT…PVLQ), and 141–155 (TGVS…PSQS). Over residues 255-267 (GSAPAGNPGAAGP) the composition is skewed to low complexity. Over residues 355-372 (PQPPSSQPQPQPQPPPSA) the composition is skewed to pro residues. At S434 the chain carries Phosphoserine. 2 disordered regions span residues 475–585 (RARG…VKRK) and 598–617 (DEEE…PILP). Positions 495–518 (RPEEEGEKKRRKKSSGERLKEEKP) are enriched in basic and acidic residues. A phosphoserine mark is found at S555 and S564. Over residues 574 to 585 (QKRRSNRQVKRK) the composition is skewed to basic residues. K611 participates in a covalent cross-link: Glycyl lysine isopeptide (Lys-Gly) (interchain with G-Cter in SUMO). Chromo domains follow at residues 644 to 711 (AIVD…AQMR) and 726 to 792 (VEVD…RVNR). The Helicase ATP-binding domain maps to 825–999 (LFNWYNRQNC…FSLLHFLEPS (175 aa)). 838-845 (DEMGLGKT) contacts ATP. The DEAH box motif lies at 950–953 (DEAH). The Helicase C-terminal domain occupies 1139 to 1290 (LIDKLLPKLK…KAVLQSMSGR (152 aa)). A phosphoserine mark is found at S1422 and S1426. The segment at 1694–1715 (EDPEYKPLQGPPKDPDDEGDPL) is disordered. Residues 1791–2304 (IARREKQQRW…LVELEVECME (514 aa)) are interaction with FAM124B. Phosphoserine is present on residues S1978 and S1980. Residues 1990–2019 (QCTSRTASPSPLRPDAPVEKSPEESTVQVP) are disordered. The residue at position 1995 (T1995) is a Phosphothreonine. 3 positions are modified to phosphoserine: S1997, S1999, and S2010. A Glycyl lysine isopeptide (Lys-Gly) (interchain with G-Cter in SUMO2) cross-link involves residue K2027. Residues S2040, S2070, and S2072 each carry the phosphoserine modification. A disordered region spans residues 2045 to 2120 (VRVGSSDTAP…RSRPKLYDEE (76 aa)). The segment covering 2065 to 2074 (EDEDDSDSEL) has biased composition (acidic residues). Residues 2077–2096 (SKLSPSSSSSSSSSSSSSST) show a composition bias toward low complexity. Residues 2104–2118 (EEKLTADRSRPKLYD) show a composition bias toward basic and acidic residues. S2184, S2202, and S2204 each carry phosphoserine. The disordered stretch occupies residues 2187–2233 (VTAGGILGPGNHLLDSPSLTPGEDGDSPVPTPRSGSAASMAEEEASA). T2206 carries the post-translational modification Phosphothreonine. The residue at position 2213 (S2213) is a Phosphoserine. Position 2217 is a phosphothreonine (T2217). Low complexity predominate over residues 2222-2233 (SAASMAEEEASA). Residue S2225 is modified to Phosphoserine. K2258 is covalently cross-linked (Glycyl lysine isopeptide (Lys-Gly) (interchain with G-Cter in SUMO2)). The disordered stretch occupies residues 2486–2582 (HVDSSTMLHH…NSDSSEDADD (97 aa)). The span at 2493–2511 (LHHHHHHPHPHHHHHHHPG) shows a compositional bias: basic residues. The span at 2514 to 2529 (TTGYPSSPATTTSGTA) shows a compositional bias: low complexity. Position 2520 is a phosphoserine (S2520). Over residues 2537–2551 (PEDDDEEEDEEDDDL) the composition is skewed to acidic residues.

The protein belongs to the SNF2/RAD54 helicase family. CHD8 subfamily. Interacts with CTNNB1 and PIAS3. Component of some MLL1/MLL complex, at least composed of the core components KMT2A/MLL1, ASH2L, HCFC1/HCF1, WDR5 and RBBP5, as well as the facultative components BACC1, CHD8, E2F6, HSP70, INO80C, KANSL1, LAS1L, MAX, MCRS1, MGA, KAT8/MOF, PELP1, PHF20, PRP31, RING2, RUVB1/TIP49A, RUVB2/TIP49B, SENP3, TAF1, TAF4, TAF6, TAF7, TAF9 and TEX10. Interacts with CHD7. Interacts with FAM124B. Interacts with p53/TP53 and histone H1. Interacts with CTCF. Interacts with TLK2. Interacts with HNRNPL in an RNA-dependent manner. In terms of processing, sumoylated.

The protein localises to the nucleus. The enzyme catalyses ATP + H2O = ADP + phosphate + H(+). In terms of biological role, ATP-dependent chromatin-remodeling factor, it slides nucleosomes along DNA; nucleosome sliding requires ATP. Acts as a transcription repressor by remodeling chromatin structure and recruiting histone H1 to target genes. Suppresses p53/TP53-mediated apoptosis by recruiting histone H1 and preventing p53/TP53 transactivation activity. Acts as a negative regulator of Wnt signaling pathway by regulating beta-catenin (CTNNB1) activity. Negatively regulates CTNNB1-targeted gene expression by being recruited specifically to the promoter regions of several CTNNB1 responsive genes. Involved in both enhancer blocking and epigenetic remodeling at chromatin boundary via its interaction with CTCF. Acts as a suppressor of STAT3 activity by suppressing the LIF-induced STAT3 transcriptional activity. Also acts as a transcription activator via its interaction with ZNF143 by participating in efficient U6 RNA polymerase III transcription. Regulates alternative splicing of a core group of genes involved in neuronal differentiation, cell cycle and DNA repair. Enables H3K36me3-coupled transcription elongation and co-transcriptional RNA processing likely via interaction with HNRNPL. This Mus musculus (Mouse) protein is Chromodomain-helicase-DNA-binding protein 8.